The chain runs to 2224 residues: Protein disabled (2224 aa).

Positions 45–197 constitute a PID domain; it reads FGDGVQFKAK…LHDHSSQLAS (153 aa). Tyr-112 is modified (phosphotyrosine; by ABL). Positions 281–377 are disordered; it reads GISQMERITP…GSASAGLQAA (97 aa). Residues 363 to 377 are compositionally biased toward low complexity; that stretch reads TSSSHGSASAGLQAA. Phosphotyrosine; by ABL is present on Tyr-483. 3 disordered regions span residues 607 to 654, 704 to 724, and 766 to 906; these read PTGH…DPFQ, LQLQ…VSAL, and RLQE…ASLG. Over residues 711–723 the composition is skewed to polar residues; that stretch reads STVRNRPTASVSA. Pro residues predominate over residues 780-799; that stretch reads PEPPPRPDSTPYSEPPPLPP. The segment covering 827–839 has biased composition (polar residues); the sequence is LNSNVTARRTASS. Residues 880–890 show a composition bias toward pro residues; the sequence is GAPPPLLPPPS. At Ser-998 the chain carries Phosphoserine. 6 disordered regions span residues 1212 to 1321, 1334 to 1519, 1545 to 1566, 1603 to 2100, 2134 to 2164, and 2177 to 2224; these read QTHA…TKDD, NLSL…HTDR, ARRD…LSRS, AYER…PITQ, AGSA…RQEL, and KQED…DENM. Over residues 1240 to 1249 the composition is skewed to acidic residues; it reads DYDEDEDADA. Residues 1267–1281 show a composition bias toward polar residues; that stretch reads GQDQYEKLSTSTQQL. The segment covering 1292–1302 has biased composition (low complexity); that stretch reads QQLQQQSLPPK. Phosphoserine is present on residues Ser-1336, Ser-1339, Ser-1344, and Ser-1348. Polar residues-rich tracts occupy residues 1361 to 1373, 1386 to 1401, and 1438 to 1451; these read TPSQ…TSPI, PSQL…TATK, and SNTS…SPCS. Residues 1555–1564 are compositionally biased toward basic residues; it reads QQRKFKHGLS. 2 positions are modified to phosphotyrosine; by ABL: Tyr-1604 and Tyr-1609. Residues 1616–1647 show a composition bias toward basic and acidic residues; it reads YDKRGQLRGKYRGDHRDRERERDRDREYRDYA. The stretch at 1631-1642 is one Alternate Arg and acidic residues repeat; sequence RDRERERDRDRE. The segment at 1631–1743 is repeat-rich region; sequence RDRERERDRD…RERDRERDRE (113 aa). Tyr-1643, Tyr-1646, Tyr-1655, and Tyr-1681 each carry phosphotyrosine; by ABL. Residues 1680-1701 show a composition bias toward basic and acidic residues; that stretch reads LYDRERDRDRERDRKSFDRESL. Residues 1682-1692 form an Alternate Arg and acidic residues repeat; that stretch reads DRERDRDRERD. Phosphoserine is present on residues Ser-1700, Ser-1713, and Ser-1716. A compositionally biased stretch (basic and acidic residues) spans 1725 to 1746; that stretch reads DSRDDYRGDRERDRERDREQMK. Residues 1733-1743 form an Alternate Arg and acidic residues repeat; the sequence is DRERDRERDRE. Residue Tyr-1768 is modified to Phosphotyrosine; by ABL. The span at 1775–1789 shows a compositional bias: polar residues; the sequence is DFQQRSGVRSLQRPN. Phosphoserine is present on residues Ser-1811, Ser-1812, Ser-1814, and Ser-1815. Over residues 1838 to 1848 the composition is skewed to basic and acidic residues; sequence ETERRLAESRR. Over residues 1882–1894 the composition is skewed to low complexity; the sequence is APSASTSAPSRSS. Tyr-1905 is subject to Phosphotyrosine; by ABL. Acidic residues predominate over residues 1913 to 1929; it reads DDDDDDDEDYVDDEPPT. Residues 1945 to 1960 are compositionally biased toward basic and acidic residues; that stretch reads HQRMLESERRQMERHQ. Polar residues-rich tracts occupy residues 1988-2003, 2013-2024, and 2050-2067; these read YEQT…ASST, GESSAGVTSSKF, and CNST…NGGS. Ser-2074 carries the post-translational modification Phosphoserine. Residues 2077–2086 show a composition bias toward basic and acidic residues; sequence FSDREKREQF. Over residues 2149-2162 the composition is skewed to polar residues; sequence RKQNMRTSKLQQRQ. Residues 2187–2206 show a composition bias toward basic and acidic residues; that stretch reads FFKSPDQEQAMDQHNDDTEG.

Binds the SH3 domains of drk via the Pro-rich domain. When phosphorylated, can interact with the SH2 domains of drk. Binds sev via the phosphotyrosine interaction domain (PID). Post-translationally, probably phosphorylated by the Abl tyrosine kinase. Phosphorylated on tyrosine residues in response to sevenless activation. Uniformly expressed in the embryo from blastoderm through gastrulation. Highly expressed in the mesoderm and CNS during germ-band retraction. CNS expression is later localized to axon bundles. Detected in the embryonic PNS and body wall muscles. Expressed in the eye at the morphogenetic furrow and in developing photoreceptor cells posterior to the furrow.

It localises to the cytoplasm. In terms of biological role, together with Abl, involved in embryonic neural development. May have a role in eye development. Acts as an adapter protein for SH2-domain containing proteins during sevenless (sev) signaling. This chain is Protein disabled (Dab), found in Drosophila melanogaster (Fruit fly).